The following is a 250-amino-acid chain: Small ribosomal subunit protein uS3 (250 aa).

The 69-residue stretch at 39–107 (VREFLTKKLK…PAQVSINEID (69 aa)) folds into the KH type-2 domain. A disordered region spans residues 215-250 (MNPAPAEERPAKRGRGRGEGQERRGRRGDRAADKGE). The span at 220–250 (AEERPAKRGRGRGEGQERRGRRGDRAADKGE) shows a compositional bias: basic and acidic residues.

Belongs to the universal ribosomal protein uS3 family. In terms of assembly, part of the 30S ribosomal subunit. Forms a tight complex with proteins S10 and S14.

Its function is as follows. Binds the lower part of the 30S subunit head. Binds mRNA in the 70S ribosome, positioning it for translation. The polypeptide is Small ribosomal subunit protein uS3 (Acinetobacter baumannii (strain SDF)).